The following is a 167-amino-acid chain: Ribosome-binding factor A (167 aa).

The tract at residues 122–167 (LAASAKHAGEADPYKGDSPEDIDEDDFDEEDTDLSGDNDLDEDANR) is disordered. The span at 128–139 (HAGEADPYKGDS) shows a compositional bias: basic and acidic residues. The segment covering 140–167 (PEDIDEDDFDEEDTDLSGDNDLDEDANR) has biased composition (acidic residues).

It belongs to the RbfA family. Monomer. Binds 30S ribosomal subunits, but not 50S ribosomal subunits or 70S ribosomes.

The protein resides in the cytoplasm. Functionally, one of several proteins that assist in the late maturation steps of the functional core of the 30S ribosomal subunit. Associates with free 30S ribosomal subunits (but not with 30S subunits that are part of 70S ribosomes or polysomes). Required for efficient processing of 16S rRNA. May interact with the 5'-terminal helix region of 16S rRNA. This chain is Ribosome-binding factor A, found in Paenarthrobacter aurescens (strain TC1).